The primary structure comprises 584 residues: Optineurin (584 aa).

Positions 1–32 (MSHQPLSCLTEKGDSPCETPGNGPSNMVHPSL) are disordered. Residues 38–180 (EELLQQMKEL…VSELQLKLNS (143 aa)) are a coiled coil. The interval 58-219 (MKLNNQAMKG…TPTRTDPISL (162 aa)) is interaction with Rab8. Positions 186 to 191 (DSFVEI) match the LIR motif. Ser187 is subject to Phosphoserine. Coiled coils occupy residues 243–278 (CLRE…HSST) and 307–511 (IQVT…DIEE). Positions 267 to 295 (DFEKKANGHSSTEKQTARRADREKEDKGQ) are enriched in basic and acidic residues. A disordered region spans residues 267–302 (DFEKKANGHSSTEKQTARRADREKEDKGQESVGSEV). Ser345 bears the Phosphoserine mark. Residues 414-584 (TKQQAEKVDK…LQIHVMDCII (171 aa)) are interaction with HD. An interaction with MYO6 region spans residues 415 to 524 (KQQAEKVDKM…RQSLMEMQCR (110 aa)). Positions 477–482 (DFHAER) match the UBAN motif. Position 530 is a phosphoserine (Ser530). The CCHC NOA-type zinc-finger motif lies at 554 to 584 (PRSIPIHSCPKCGEVLPDIDTLQIHVMDCII). Zn(2+) contacts are provided by Cys562, Cys565, His578, and Cys582.

As to quaternary structure, self-associates. Interacts with HD, GTF3A, TRAF3, TBK1 and MYO6. Interacts (via UBAN) with ubiquitinated TFRC. Interacts with active GTP-bound Rab8 (RAB8A and/or RAB8B). Interacts with TBC1D17. Binds to linear ubiquitin chains. Interacts with LC3 family members MAP1LC3A, MAP1LC3B, GABARAP, GABARAPL1 and GABARAPL2; OPTN phosphorylation increases the association (at least with MAP1LC3B). Interacts with RAB12; the interaction may be indirect. Interacts with TBK1; this interaction leads to the Golgi localization of TBK1 and its subsequent activation. Interacts with palmitoyltransferase ZDHHC17/HIP14; the interaction does not lead to palmitoylation of OPTN. Interacts with CYLD. Interacts with TOM1; the interaction is indirect and is mediated by MYO6, which acts as a bridge between TOM1 and OPTN. Interacts with USP12; the interaction is independent of USP12 deubiquitinase activity and may be involved in regulation of autophagic flux. Phosphorylated by TBK1, leading to restrict bacterial proliferation in case of infection. In terms of tissue distribution, in eye, it is expressed in anterior segment, retina, and optic nerve blood vessels (at protein level). Highly expressed in adult liver, heart and testis.

It localises to the cytoplasm. The protein localises to the perinuclear region. It is found in the golgi apparatus. Its subcellular location is the trans-Golgi network. The protein resides in the cytoplasmic vesicle. It localises to the autophagosome. The protein localises to the recycling endosome. In terms of biological role, plays an important role in the maintenance of the Golgi complex, in membrane trafficking, in exocytosis, through its interaction with myosin VI and Rab8. Links myosin VI to the Golgi complex and plays an important role in Golgi ribbon formation. Plays a role in the activation of innate immune response during viral infection. Mechanistically, recruits TBK1 at the Golgi apparatus, promoting its trans-phosphorylation after RLR or TLR3 stimulation. In turn, activated TBK1 phosphorylates its downstream partner IRF3 to produce IFN-beta. Plays a neuroprotective role in the eye and optic nerve. May act by regulating membrane trafficking and cellular morphogenesis via a complex that contains Rab8 and huntingtin (HD). Mediates the interaction of Rab8 with the probable GTPase-activating protein TBC1D17 during Rab8-mediated endocytic trafficking, such as that of transferrin receptor (TFRC/TfR); regulates Rab8 recruitment to tubules emanating from the endocytic recycling compartment. Autophagy receptor that interacts directly with both the cargo to become degraded and an autophagy modifier of the MAP1 LC3 family; targets ubiquitin-coated bacteria (xenophagy), such as cytoplasmic Salmonella enterica, and appears to function in the same pathway as SQSTM1 and CALCOCO2/NDP52. This chain is Optineurin (Optn), found in Mus musculus (Mouse).